The sequence spans 510 residues: NAD(P)H-quinone oxidoreductase subunit 2 B, chloroplastic (510 aa).

The next 13 membrane-spanning stretches (helical) occupy residues 24–44, 57–77, 99–119, 124–144, 149–169, 183–203, 227–247, 295–315, 323–343, 354–374, 395–415, 418–438, and 482–502; these read LLLF…GLIL, ISWF…VLLF, IFQF…VEYI, MAIT…MFLC, LITI…LSGY, YLLM…WLYG, PGIS…LSLA, WHLL…LIAI, MLAY…IVGD, YMLF…SFGL, ALSL…AGFF, LYLF…IGLL, and LSMI…NPII.

The protein belongs to the complex I subunit 2 family. In terms of assembly, NDH is composed of at least 16 different subunits, 5 of which are encoded in the nucleus.

It is found in the plastid. Its subcellular location is the chloroplast thylakoid membrane. The enzyme catalyses a plastoquinone + NADH + (n+1) H(+)(in) = a plastoquinol + NAD(+) + n H(+)(out). The catalysed reaction is a plastoquinone + NADPH + (n+1) H(+)(in) = a plastoquinol + NADP(+) + n H(+)(out). Its function is as follows. NDH shuttles electrons from NAD(P)H:plastoquinone, via FMN and iron-sulfur (Fe-S) centers, to quinones in the photosynthetic chain and possibly in a chloroplast respiratory chain. The immediate electron acceptor for the enzyme in this species is believed to be plastoquinone. Couples the redox reaction to proton translocation, and thus conserves the redox energy in a proton gradient. The protein is NAD(P)H-quinone oxidoreductase subunit 2 B, chloroplastic of Lotus japonicus (Lotus corniculatus var. japonicus).